Consider the following 543-residue polypeptide: Heparanase-like protein 1 (543 aa).

Residues 1 to 24 (MGFRVCVIVVFLGCLLLVPEKTMA) form the signal peptide. N-linked (GlcNAc...) asparagine glycosylation occurs at asparagine 184. The active-site Proton donor is the glutamate 201. N-linked (GlcNAc...) asparagine glycosylation occurs at asparagine 304. Glutamate 320 acts as the Nucleophile in catalysis. N-linked (GlcNAc...) asparagine glycans are attached at residues asparagine 425 and asparagine 428.

The protein belongs to the glycosyl hydrolase 79 family.

Its subcellular location is the lysosome membrane. It is found in the secreted. In terms of biological role, endoglycosidase which is a cell surface and extracellular matrix-degrading enzyme. Cleaves heparan sulfate proteoglycans (HSPGs) into heparan sulfate side chains and core proteoglycans. The sequence is that of Heparanase-like protein 1 from Arabidopsis thaliana (Mouse-ear cress).